Consider the following 20-residue polypeptide: Cytochrome c oxidase subunit 7B-heart, mitochondrial (20 aa).

This sequence belongs to the cytochrome c oxidase VIIb family. As to quaternary structure, component of the cytochrome c oxidase (complex IV, CIV), a multisubunit enzyme composed of 14 subunits. The complex is composed of a catalytic core of 3 subunits MT-CO1, MT-CO2 and MT-CO3, encoded in the mitochondrial DNA, and 11 supernumerary subunits COX4I, COX5A, COX5B, COX6A, COX6B, COX6C, COX7A, COX7B, COX7C, COX8 and NDUFA4, which are encoded in the nuclear genome. The complex exists as a monomer or a dimer and forms supercomplexes (SCs) in the inner mitochondrial membrane with NADH-ubiquinone oxidoreductase (complex I, CI) and ubiquinol-cytochrome c oxidoreductase (cytochrome b-c1 complex, complex III, CIII), resulting in different assemblies (supercomplex SCI(1)III(2)IV(1) and megacomplex MCI(2)III(2)IV(2)).

The protein resides in the mitochondrion inner membrane. It carries out the reaction 4 Fe(II)-[cytochrome c] + O2 + 8 H(+)(in) = 4 Fe(III)-[cytochrome c] + 2 H2O + 4 H(+)(out). Its pathway is energy metabolism; oxidative phosphorylation. Its function is as follows. Component of the cytochrome c oxidase, the last enzyme in the mitochondrial electron transport chain which drives oxidative phosphorylation. The respiratory chain contains 3 multisubunit complexes succinate dehydrogenase (complex II, CII), ubiquinol-cytochrome c oxidoreductase (cytochrome b-c1 complex, complex III, CIII) and cytochrome c oxidase (complex IV, CIV), that cooperate to transfer electrons derived from NADH and succinate to molecular oxygen, creating an electrochemical gradient over the inner membrane that drives transmembrane transport and the ATP synthase. Cytochrome c oxidase is the component of the respiratory chain that catalyzes the reduction of oxygen to water. Electrons originating from reduced cytochrome c in the intermembrane space (IMS) are transferred via the dinuclear copper A center (CU(A)) of subunit 2 and heme A of subunit 1 to the active site in subunit 1, a binuclear center (BNC) formed by heme A3 and copper B (CU(B)). The BNC reduces molecular oxygen to 2 water molecules using 4 electrons from cytochrome c in the IMS and 4 protons from the mitochondrial matrix. The polypeptide is Cytochrome c oxidase subunit 7B-heart, mitochondrial (Thunnus obesus (Bigeye tuna)).